We begin with the raw amino-acid sequence, 624 residues long: ERAD-associated E3 ubiquitin-protein ligase ASI1 (624 aa).

Over 1–69 (MNSSTSSENV…SEEIPPTLRS (69 aa)) the chain is Perinuclear space. Asn-2, Asn-19, and Asn-29 each carry an N-linked (GlcNAc...) asparagine glycan. A helical membrane pass occupies residues 70–90 (VFDTIGFFFSPYAIFCFVIAI). The Nuclear segment spans residues 91–116 (VLNRFVVFYAVLNNGSRRTLPLWLSN). A helical membrane pass occupies residues 117 to 137 (VFHVSAVVVLAMVSLGPLTLG). Residues 138–152 (KDFKILGDPAFAQEK) are Perinuclear space-facing. The chain crosses the membrane as a helical span at residues 153-173 (FLLNIFYAFAYSYCVETIFTI). Topologically, residues 174–209 (MRNSSPLEGTDYSLFELSIQFYTMTNNNTKFLDSPD) are nuclear. Residues 210 to 230 (YIIDCSMAILSRILIHLVEIF) traverse the membrane as a helical segment. The Perinuclear space segment spans residues 231–273 (RLRNYRLLFSTIMNLCHICYLGIRVKQGGWKSLPFSVKFRHFP). A helical membrane pass occupies residues 274-294 (KLFSVSIICLSLLIFKLSCLI). Over 295 to 624 (RWDPFGKSRN…CKVHPVSDSK (330 aa)) the chain is Nuclear. The segment at 467 to 490 (TSDDEYSEDYEPSEVESLGDSDEE) is disordered. Over residues 468 to 490 (SDDEYSEDYEPSEVESLGDSDEE) the composition is skewed to acidic residues. The RING-type; atypical zinc finger occupies 568 to 608 (CAVCKVNERNTVLWPCRCFAICEDCRISLGLRGFSTCVCCR).

Component of the Asi complex, which contains ASI1, ASI2 and ASI3. Interacts directly with ASI3. In terms of processing, glycosylation is not required for ASI1 function.

It is found in the nucleus inner membrane. It carries out the reaction S-ubiquitinyl-[E2 ubiquitin-conjugating enzyme]-L-cysteine + [acceptor protein]-L-lysine = [E2 ubiquitin-conjugating enzyme]-L-cysteine + N(6)-ubiquitinyl-[acceptor protein]-L-lysine.. Its function is as follows. E3 ubiquitin-protein ligase which transfers ubiquitin to substrates promoting their degradation. Part of the nuclear inner membrane (INM)-specific branch of the ER-associated degradation (ERAD) pathway, required for the elimination of misfolded proteins in the INM, a specialized ER subdomain. Required for ERG11 degradation. Negative regulator of SPS-sensor signaling. Together with ASI2 and ASI3, prevents the unprocessed precursor forms of STP1 and STP2 that escape cytoplasmic anchoring from inducing SPS-sensor-regulated genes in the absence of inducing signals. Controls amino acid permease (AAP) gene expression in response to amino acid availability, a process mediated by the transcription factors STP1 and STP1. This chain is ERAD-associated E3 ubiquitin-protein ligase ASI1 (ASI1), found in Saccharomyces cerevisiae (strain ATCC 204508 / S288c) (Baker's yeast).